Reading from the N-terminus, the 2281-residue chain is Protein Ycf2 (2281 aa).

1634–1641 is a binding site for ATP; it reads GSIGTGRS.

It belongs to the Ycf2 family.

It localises to the plastid. The protein resides in the chloroplast stroma. In terms of biological role, probable ATPase of unknown function. Its presence in a non-photosynthetic plant (Epifagus virginiana) and experiments in tobacco indicate that it has an essential function which is probably not related to photosynthesis. In Buxus microphylla (Littleleaf boxwood), this protein is Protein Ycf2.